Here is a 313-residue protein sequence, read N- to C-terminus: Protein HEXIM2 (313 aa).

Over residues 1–13 the composition is skewed to polar residues; the sequence is MATVNHTNCNTAS. The disordered stretch occupies residues 1–78; the sequence is MATVNHTNCN…RGSRTQSPGG (78 aa). 4 positions are modified to phosphoserine: serine 28, serine 52, serine 75, and serine 80. The span at 64–77 shows a compositional bias: polar residues; that stretch reads SSCNIRGSRTQSPG. 3 disordered regions span residues 111-139, 155-194, and 267-313; these read EKQQRDERQSQRASRVREEMFAKGQPLAP, PNLDVLHGPSHSGSGGENEAGDSDGQGRAHGEFQQRDFSE, and QENE…AGDR. The span at 112 to 131 shows a compositional bias: basic and acidic residues; the sequence is KQQRDERQSQRASRVREEMF. The interaction with P-TEFb stretch occupies residues 139–142; that stretch reads PYNT. Residues 179-194 are compositionally biased toward basic and acidic residues; the sequence is GQGRAHGEFQQRDFSE. The stretch at 207-276 forms a coiled coil; it reads RSKQELVRDY…QENEMWNREG (70 aa). The interval 225–286 is interaction with CCNT1, HEXIM1 and HEXIM2; sequence QAEQETRRLR…GYCDQEKPAS (62 aa).

Belongs to the HEXIM family. As to quaternary structure, homooligomer and heterooligomer with HEXIM1; probably dimeric. Core component of the 7SK RNP complex, at least composed of 7SK RNA, LARP7, MEPCE, HEXIM1 (or HEXIM2) and P-TEFb (composed of CDK9 and CCNT1/cyclin-T1). Interacts with CCNT2.

It is found in the nucleus. Transcriptional regulator which functions as a general RNA polymerase II transcription inhibitor. Core component of the 7SK RNP complex: in cooperation with 7SK snRNA sequesters P-TEFb in a large inactive 7SK snRNP complex preventing RNA polymerase II phosphorylation and subsequent transcriptional elongation. This Mus musculus (Mouse) protein is Protein HEXIM2 (Hexim2).